The chain runs to 487 residues: Bifunctional protein HldE (487 aa).

Residues 1–329 are ribokinase; it reads MLHAVETAFY…GALLTDATYE (329 aa). Position 204-207 (204-207) interacts with ATP; that stretch reads NRGE. Residue aspartate 274 is part of the active site. The tract at residues 356–487 is cytidylyltransferase; that stretch reads FTNGCFDLLH…GIVQRISAQK (132 aa).

The protein in the N-terminal section; belongs to the carbohydrate kinase PfkB family. It in the C-terminal section; belongs to the cytidylyltransferase family. In terms of assembly, homodimer.

It catalyses the reaction D-glycero-beta-D-manno-heptose 7-phosphate + ATP = D-glycero-beta-D-manno-heptose 1,7-bisphosphate + ADP + H(+). It carries out the reaction D-glycero-beta-D-manno-heptose 1-phosphate + ATP + H(+) = ADP-D-glycero-beta-D-manno-heptose + diphosphate. It functions in the pathway nucleotide-sugar biosynthesis; ADP-L-glycero-beta-D-manno-heptose biosynthesis; ADP-L-glycero-beta-D-manno-heptose from D-glycero-beta-D-manno-heptose 7-phosphate: step 1/4. The protein operates within nucleotide-sugar biosynthesis; ADP-L-glycero-beta-D-manno-heptose biosynthesis; ADP-L-glycero-beta-D-manno-heptose from D-glycero-beta-D-manno-heptose 7-phosphate: step 3/4. Catalyzes the phosphorylation of D-glycero-D-manno-heptose 7-phosphate at the C-1 position to selectively form D-glycero-beta-D-manno-heptose-1,7-bisphosphate. Functionally, catalyzes the ADP transfer from ATP to D-glycero-beta-D-manno-heptose 1-phosphate, yielding ADP-D-glycero-beta-D-manno-heptose. In Magnetococcus marinus (strain ATCC BAA-1437 / JCM 17883 / MC-1), this protein is Bifunctional protein HldE.